A 38-amino-acid chain; its full sequence is Large ribosomal subunit protein bL36 (38 aa).

This sequence belongs to the bacterial ribosomal protein bL36 family.

The protein is Large ribosomal subunit protein bL36 of Chlorobium limicola (strain DSM 245 / NBRC 103803 / 6330).